Reading from the N-terminus, the 398-residue chain is 1-deoxy-D-xylulose 5-phosphate reductoisomerase (398 aa).

8 residues coordinate NADPH: T10, G11, S12, I13, G36, R37, N38, and N124. 1-deoxy-D-xylulose 5-phosphate is bound at residue K125. An NADPH-binding site is contributed by E126. A Mn(2+)-binding site is contributed by D150. 4 residues coordinate 1-deoxy-D-xylulose 5-phosphate: S151, E152, S186, and H209. Residue E152 coordinates Mn(2+). G215 serves as a coordination point for NADPH. Positions 222, 227, 228, and 231 each coordinate 1-deoxy-D-xylulose 5-phosphate. Residue E231 participates in Mn(2+) binding.

Belongs to the DXR family. In terms of assembly, homodimer. It depends on Mg(2+) as a cofactor. Requires Mn(2+) as cofactor.

It catalyses the reaction 2-C-methyl-D-erythritol 4-phosphate + NADP(+) = 1-deoxy-D-xylulose 5-phosphate + NADPH + H(+). It functions in the pathway isoprenoid biosynthesis; isopentenyl diphosphate biosynthesis via DXP pathway; isopentenyl diphosphate from 1-deoxy-D-xylulose 5-phosphate: step 1/6. Functionally, catalyzes the NADPH-dependent rearrangement and reduction of 1-deoxy-D-xylulose-5-phosphate (DXP) to 2-C-methyl-D-erythritol 4-phosphate (MEP). The polypeptide is 1-deoxy-D-xylulose 5-phosphate reductoisomerase (Yersinia enterocolitica serotype O:8 / biotype 1B (strain NCTC 13174 / 8081)).